A 117-amino-acid chain; its full sequence is Ribosome-binding factor A (117 aa).

Belongs to the RbfA family. As to quaternary structure, monomer. Binds 30S ribosomal subunits, but not 50S ribosomal subunits or 70S ribosomes.

Its subcellular location is the cytoplasm. One of several proteins that assist in the late maturation steps of the functional core of the 30S ribosomal subunit. Associates with free 30S ribosomal subunits (but not with 30S subunits that are part of 70S ribosomes or polysomes). Required for efficient processing of 16S rRNA. May interact with the 5'-terminal helix region of 16S rRNA. The polypeptide is Ribosome-binding factor A (Streptococcus thermophilus (strain CNRZ 1066)).